A 541-amino-acid chain; its full sequence is Putative acyl-CoA dehydrogenase AidB (541 aa).

FAD is bound by residues Met182–Ser191, Thr185, Ser191, Phe216–Ser218, Ser218, Ile423–Leu433, and Asn429. Residues Val445 to Val541 are dsDNA-binding.

The protein belongs to the acyl-CoA dehydrogenase family. In terms of assembly, homotetramer. Dimer of dimers. It depends on FAD as a cofactor.

Its subcellular location is the cytoplasm. Functionally, part of the adaptive DNA-repair response to alkylating agents. Could prevent alkylation damage by protecting DNA and destroying alkylating agents that have yet to reach their DNA target. Binds to double-stranded DNA with a preference for a DNA region that includes its own promoter. Shows weak isovaleryl-CoA dehydrogenase activity in vitro. The sequence is that of Putative acyl-CoA dehydrogenase AidB (aidB) from Escherichia coli (strain K12).